We begin with the raw amino-acid sequence, 597 residues long: tRNA uridine 5-carboxymethylaminomethyl modification enzyme MnmG (597 aa).

10-15 (GGGHAG) is a binding site for FAD. 267 to 281 (GPRYCPSIEDKVVRF) serves as a coordination point for NAD(+).

It belongs to the MnmG family. Homodimer. Heterotetramer of two MnmE and two MnmG subunits. The cofactor is FAD.

The protein localises to the cytoplasm. Functionally, NAD-binding protein involved in the addition of a carboxymethylaminomethyl (cmnm) group at the wobble position (U34) of certain tRNAs, forming tRNA-cmnm(5)s(2)U34. This is tRNA uridine 5-carboxymethylaminomethyl modification enzyme MnmG from Thermus thermophilus (strain ATCC BAA-163 / DSM 7039 / HB27).